Reading from the N-terminus, the 339-residue chain is GTP 3',8-cyclase (339 aa).

A Radical SAM core domain is found at 13–249 (RYGRPLRDLR…GEVAQRHAFA (237 aa)). A GTP-binding site is contributed by Arg-22. [4Fe-4S] cluster contacts are provided by Cys-29 and Cys-33. Position 35 (Tyr-35) interacts with S-adenosyl-L-methionine. Cys-36 is a [4Fe-4S] cluster binding site. GTP is bound at residue Arg-75. Gly-79 is an S-adenosyl-L-methionine binding site. Thr-106 provides a ligand contact to GTP. S-adenosyl-L-methionine is bound at residue Ser-130. Lys-168 lines the GTP pocket. Met-202 is a binding site for S-adenosyl-L-methionine. Residues Cys-266 and Cys-269 each contribute to the [4Fe-4S] cluster site. Residue 271 to 273 (RAR) participates in GTP binding. Cys-283 contributes to the [4Fe-4S] cluster binding site.

It belongs to the radical SAM superfamily. MoaA family. In terms of assembly, monomer and homodimer. [4Fe-4S] cluster serves as cofactor.

The catalysed reaction is GTP + AH2 + S-adenosyl-L-methionine = (8S)-3',8-cyclo-7,8-dihydroguanosine 5'-triphosphate + 5'-deoxyadenosine + L-methionine + A + H(+). It participates in cofactor biosynthesis; molybdopterin biosynthesis. In terms of biological role, catalyzes the cyclization of GTP to (8S)-3',8-cyclo-7,8-dihydroguanosine 5'-triphosphate. The chain is GTP 3',8-cyclase from Xanthomonas campestris pv. campestris (strain 8004).